The primary structure comprises 505 residues: Deoxyguanosinetriphosphate triphosphohydrolase (505 aa).

The 208-residue stretch at 66–273 folds into the HD domain; that stretch reads RLTHSMEVQQ…MEAADDISYC (208 aa).

It belongs to the dGTPase family. Type 1 subfamily. Homotetramer. The cofactor is Mg(2+).

The catalysed reaction is dGTP + H2O = 2'-deoxyguanosine + triphosphate + H(+). DGTPase preferentially hydrolyzes dGTP over the other canonical NTPs. The polypeptide is Deoxyguanosinetriphosphate triphosphohydrolase (Escherichia coli O81 (strain ED1a)).